A 136-amino-acid polypeptide reads, in one-letter code: HTH-type transcriptional regulator CysB (136 aa).

One can recognise an HTH lysR-type domain in the interval 1–59 (MDVRQLRSLVTLVEVRFSVSRAAECLHLVQSAVTQHLKQLEAELGTRLFVRHGKRLVGL). The segment at residues 19 to 38 (VSRAAECLHLVQSAVTQHLK) is a DNA-binding region (H-T-H motif).

It belongs to the LysR transcriptional regulatory family.

In terms of biological role, this protein is a positive regulator of gene expression for the cysteine regulon. This is HTH-type transcriptional regulator CysB (cysB) from Thiocapsa roseopersicina.